The sequence spans 246 residues: MAGHSQFSNIKHRKGAQDAKRSQKFTKLIREITVAAKQGLPDPELNPRLRSAIFAARKENLPKDKIETAIKNATGNVAGENYEEIQYEGHGPSGTALIVHVLTNNRNRTASEVRYIFSRKGGNLGETGSVSYLFDHVGLIVYKAEGVNFDDLFSHGIELEVLNVEENDKEGLHVITCEIKDFGKVRDAFYAKFGEPELARLSWQPKDLIEISDKELIDKLSALVEELEDNDDVQYVEGNFTFVDAV.

Positions 1–22 are disordered; that stretch reads MAGHSQFSNIKHRKGAQDAKRS.

Belongs to the TACO1 family.

It localises to the cytoplasm. This Wolbachia pipientis wMel protein is Probable transcriptional regulatory protein WD_0484.